We begin with the raw amino-acid sequence, 292 residues long: Recombination-promoting nuclease RpnA (292 aa).

This sequence belongs to the Rpn/YhgA-like nuclease family. The cofactor is Mg(2+).

Its activity is regulated as follows. Inhibited by EDTA, Zn(2+) and by Mg(2+) plus Mn(2+); stimulated by Ca(2+) in the presence of Mg(2+). In terms of biological role, a low activity DNA endonuclease yielding 3'-hydroxyl ends, equally active on ss or dsDNA, not active on dsRNA. Shows no sequence specificity. Upon expression enhances RecA-independent DNA recombination 49-fold, concomitantly reducing viability by 88% and probably inducing DNA damage as measured by induction of the SOS repair response in RecA cells. RecA-independent DNA recombination leads to replacement of recipient genes with large segments of donor DNA rather than DNA addition to the donor strain; increased expression of RpnA leads to smaller replacement segments, suggesting this protein may play a role in generating crossover events. The polypeptide is Recombination-promoting nuclease RpnA (Escherichia coli (strain K12)).